The primary structure comprises 266 residues: GFP-like fluorescent chromoprotein cFP484 (266 aa).

The segment at residues 104–106 (QYG) is a cross-link (2-iminomethyl-5-imidazolinone (Gln-Gly)). Tyr105 carries the 2,3-didehydrotyrosine modification.

Belongs to the GFP family. Contains a chromophore consisting of modified amino acid residues. The chromophore is formed by autocatalytic backbone condensation between Xaa-N and Gly-(N+2), oxidation of Tyr-(N+1) to didehydrotyrosine, and formation of a double bond to the alpha-amino nitrogen of residue Xaa-N. Maturation of the chromophore requires nothing other than molecular oxygen. The precise stereochemistry of the tyrosine has not been determined. As to expression, tentacle and oral disk.

In terms of biological role, pigment protein that is green in color. This Clavularia sp. (Brown star polyp) protein is GFP-like fluorescent chromoprotein cFP484.